Consider the following 306-residue polypeptide: MQQILNDIAAEMALETDRGKVADYIPQLAHVDPNQFGIAVATPDGQVYVAGDASTLFSIQSISKVFTLTIGLGKLGDAIWTHVGREPSGDPFNSITVLEFESGRPRNPFINAGAIAVVDAIMMGHEPKETLGEILRFVHFIADDDSIRFDHKVAASEMDHRDRNAALAHFMKSFGHIKHDVDKVLGVYFHQCAIAMSCEQLARAGLFLVSNGVNQHTGIRVINAQQSRRINSLMMMCGHYDGAGEFAYRVGLPGKSGVGGGILTIAPGKGSIAVWSPGLDHVGNSKLGSKALELLVQKTGWSVFSN.

Substrate is bound by residues serine 61, asparagine 111, glutamate 157, asparagine 164, tyrosine 188, tyrosine 240, and valine 258.

It belongs to the glutaminase family. In terms of assembly, homotetramer.

The catalysed reaction is L-glutamine + H2O = L-glutamate + NH4(+). The protein is Glutaminase of Psychrobacter cryohalolentis (strain ATCC BAA-1226 / DSM 17306 / VKM B-2378 / K5).